The following is a 325-amino-acid chain: CRISPR-associated endonuclease Cas1 3 (325 aa).

Mn(2+) contacts are provided by Glu-152, His-217, and Glu-232.

The protein belongs to the CRISPR-associated endonuclease Cas1 family. In terms of assembly, homodimer, forms a heterotetramer with a Cas2 homodimer. The cofactor is Mg(2+). Requires Mn(2+) as cofactor.

Its function is as follows. CRISPR (clustered regularly interspaced short palindromic repeat), is an adaptive immune system that provides protection against mobile genetic elements (viruses, transposable elements and conjugative plasmids). CRISPR clusters contain spacers, sequences complementary to antecedent mobile elements, and target invading nucleic acids. CRISPR clusters are transcribed and processed into CRISPR RNA (crRNA). Acts as a dsDNA endonuclease. Involved in the integration of spacer DNA into the CRISPR cassette. This Thermodesulfovibrio yellowstonii (strain ATCC 51303 / DSM 11347 / YP87) protein is CRISPR-associated endonuclease Cas1 3.